A 162-amino-acid chain; its full sequence is MNVYEGSLVGTGLKAALVVARFNSLVTEQLLVGAADALRRHGVADGDVDVFRCPGTFELPAVLRRVVATGRYDAVVALGAVIRGGTPHFEYVSAEVTKGVAHVAMEAGCAVTMGVLTCDSMEQALERAGVKAGNKGADAAAAAVEQANVLRAIARAPARKAE.

5-amino-6-(D-ribitylamino)uracil is bound by residues F22, 56–58, and 80–82; these read TFE and AVI. (2S)-2-hydroxy-3-oxobutyl phosphate is bound at residue 85–86; the sequence is GT. The Proton donor role is filled by H88. A 5-amino-6-(D-ribitylamino)uracil-binding site is contributed by M113. Position 127 (R127) interacts with (2S)-2-hydroxy-3-oxobutyl phosphate.

Belongs to the DMRL synthase family.

It carries out the reaction (2S)-2-hydroxy-3-oxobutyl phosphate + 5-amino-6-(D-ribitylamino)uracil = 6,7-dimethyl-8-(1-D-ribityl)lumazine + phosphate + 2 H2O + H(+). It participates in cofactor biosynthesis; riboflavin biosynthesis; riboflavin from 2-hydroxy-3-oxobutyl phosphate and 5-amino-6-(D-ribitylamino)uracil: step 1/2. Catalyzes the formation of 6,7-dimethyl-8-ribityllumazine by condensation of 5-amino-6-(D-ribitylamino)uracil with 3,4-dihydroxy-2-butanone 4-phosphate. This is the penultimate step in the biosynthesis of riboflavin. The protein is 6,7-dimethyl-8-ribityllumazine synthase of Anaeromyxobacter dehalogenans (strain 2CP-1 / ATCC BAA-258).